A 143-amino-acid chain; its full sequence is MSRSGVAVADESLNAFNDLKLGKKYKFILYALNDSKTEIIVKETSAEQDYDKFLEQLPENDCLYAVYDFEYELGNNEGKRSKIVFFTWSPDTAPVRSKMVYASSKDALRRALNGVSSDIQGTDFSEVAYESVLEKVSRAAGSH.

The ADF-H domain maps to 5–137 (GVAVADESLN…AYESVLEKVS (133 aa)).

It belongs to the actin-binding proteins ADF family.

The protein localises to the cytoplasm. Its subcellular location is the cytoskeleton. It localises to the nucleus matrix. Controls reversibly actin polymerization and depolymerization in a pH-sensitive manner. It has the ability to bind G- and F-actin in a 1:1 ratio of cofilin to actin. Binding to F-actin is regulated by tropomyosin. It is the major component of intranuclear and cytoplasmic actin rods. Required for accumulation of actin at the cell division site via depolymerizing actin at the cell ends. In association with myosin II has a role in the assembly of the contractile ring via severing actin filaments. Involved in the maintenance of the contractile ring once formed. In association with profilin and capping protein, has a role in the mitotic reorganization of the actin cytoskeleton. This chain is Cofilin (COF1), found in Kluyveromyces lactis (strain ATCC 8585 / CBS 2359 / DSM 70799 / NBRC 1267 / NRRL Y-1140 / WM37) (Yeast).